Reading from the N-terminus, the 665-residue chain is Beta-galactosidase LacZ (665 aa).

Arg110 provides a ligand contact to substrate. Cys114 contacts Zn(2+). Asn148 contributes to the substrate binding site. Glu149 serves as the catalytic Proton donor. Cys157, Cys159, and Cys162 together coordinate Zn(2+). Catalysis depends on Glu303, which acts as the Nucleophile. Substrate is bound by residues Trp311 and 351-354; that span reads EKFH.

This sequence belongs to the glycosyl hydrolase 42 family.

It carries out the reaction Hydrolysis of terminal non-reducing beta-D-galactose residues in beta-D-galactosides.. The sequence is that of Beta-galactosidase LacZ from Heyndrickxia coagulans (Weizmannia coagulans).